Here is an 89-residue protein sequence, read N- to C-terminus: uncharacterized protein (89 aa).

This is an uncharacterized protein from Bacillus subtilis (strain 168).